A 397-amino-acid polypeptide reads, in one-letter code: Acetate kinase (397 aa).

N7 lines the Mg(2+) pocket. K14 contributes to the ATP binding site. R90 serves as a coordination point for substrate. D147 (proton donor/acceptor) is an active-site residue. ATP contacts are provided by residues 207-211 (HLGNG), 282-284 (DFR), and 330-334 (GLGEN). E383 contributes to the Mg(2+) binding site.

This sequence belongs to the acetokinase family. Homodimer. Mg(2+) is required as a cofactor. Mn(2+) serves as cofactor.

Its subcellular location is the cytoplasm. It carries out the reaction acetate + ATP = acetyl phosphate + ADP. It participates in metabolic intermediate biosynthesis; acetyl-CoA biosynthesis; acetyl-CoA from acetate: step 1/2. Catalyzes the formation of acetyl phosphate from acetate and ATP. Can also catalyze the reverse reaction. This is Acetate kinase from Clostridium botulinum (strain Okra / Type B1).